Reading from the N-terminus, the 606-residue chain is Phosphomethylpyrimidine synthase (606 aa).

A disordered region spans residues 84 to 103 (EPYPARSVKPEDNGLTSSPI). Substrate-binding positions include Asn209, Met238, Tyr267, His303, 323–325 (SRG), 364–367 (DGLR), and Glu403. Residue His407 participates in Zn(2+) binding. Tyr430 serves as a coordination point for substrate. His471 lines the Zn(2+) pocket. [4Fe-4S] cluster-binding residues include Cys551, Cys554, and Cys559.

This sequence belongs to the ThiC family. As to quaternary structure, homodimer. The cofactor is [4Fe-4S] cluster.

It catalyses the reaction 5-amino-1-(5-phospho-beta-D-ribosyl)imidazole + S-adenosyl-L-methionine = 4-amino-2-methyl-5-(phosphooxymethyl)pyrimidine + CO + 5'-deoxyadenosine + formate + L-methionine + 3 H(+). The protein operates within cofactor biosynthesis; thiamine diphosphate biosynthesis. Functionally, catalyzes the synthesis of the hydroxymethylpyrimidine phosphate (HMP-P) moiety of thiamine from aminoimidazole ribotide (AIR) in a radical S-adenosyl-L-methionine (SAM)-dependent reaction. The polypeptide is Phosphomethylpyrimidine synthase (Bartonella tribocorum (strain CIP 105476 / IBS 506)).